The chain runs to 755 residues: Actin-related protein 5 (755 aa).

Phosphoserine is present on S7. Residue K12 forms a Glycyl lysine isopeptide (Lys-Gly) (interchain with G-Cter in ubiquitin) linkage. T24 is modified (phosphothreonine). Phosphoserine is present on S383. A disordered region spans residues 418-444; the sequence is QRFLKASQDARQKAKEEKERVAKEEEE. Residues 425–444 show a composition bias toward basic and acidic residues; it reads QDARQKAKEEKERVAKEEEE.

This sequence belongs to the actin family. Component of the chromatin-remodeling INO80 complex, at least composed of ARP4, ARP5, ARP8, RVB1, RVB2, TAF14, NHP10, IES1, IES3, IES4, IES6, ACT1, IES2, IES5 and INO80.

The protein resides in the nucleus. Its function is as follows. Probably involved in transcription regulation via its interaction with the INO80 complex, a chromatin remodeling complex. The protein is Actin-related protein 5 (ARP5) of Saccharomyces cerevisiae (strain ATCC 204508 / S288c) (Baker's yeast).